The primary structure comprises 122 residues: MIQMQTSLEAADNSGARRLVCIKVLGGSQRRYAGIGDIIKVAVKEAIPRGKVKKGEVYNALIVRTRKGVRRADGSLIRFDNNAVVLLNNQLQPIGTRIFGPVTRELRVENFMRIVSLAPEVL.

The protein belongs to the universal ribosomal protein uL14 family. In terms of assembly, part of the 50S ribosomal subunit. Forms a cluster with proteins L3 and L19. In the 70S ribosome, L14 and L19 interact and together make contacts with the 16S rRNA in bridges B5 and B8.

Its function is as follows. Binds to 23S rRNA. Forms part of two intersubunit bridges in the 70S ribosome. The chain is Large ribosomal subunit protein uL14 from Nitrosococcus oceani (strain ATCC 19707 / BCRC 17464 / JCM 30415 / NCIMB 11848 / C-107).